The chain runs to 269 residues: 4-hydroxy-tetrahydrodipicolinate reductase (269 aa).

NAD(+) contacts are provided by residues 10–15 and Glu-36; that span reads GSSGRM. Residue Arg-37 participates in NADP(+) binding. NAD(+) is bound by residues 99–101 and 123–126; these read GTT and APNM. The Proton donor/acceptor role is filled by His-156. His-157 contributes to the (S)-2,3,4,5-tetrahydrodipicolinate binding site. Catalysis depends on Lys-160, which acts as the Proton donor. 166-167 contributes to the (S)-2,3,4,5-tetrahydrodipicolinate binding site; the sequence is GT.

This sequence belongs to the DapB family.

The protein resides in the cytoplasm. The catalysed reaction is (S)-2,3,4,5-tetrahydrodipicolinate + NAD(+) + H2O = (2S,4S)-4-hydroxy-2,3,4,5-tetrahydrodipicolinate + NADH + H(+). It carries out the reaction (S)-2,3,4,5-tetrahydrodipicolinate + NADP(+) + H2O = (2S,4S)-4-hydroxy-2,3,4,5-tetrahydrodipicolinate + NADPH + H(+). It participates in amino-acid biosynthesis; L-lysine biosynthesis via DAP pathway; (S)-tetrahydrodipicolinate from L-aspartate: step 4/4. Functionally, catalyzes the conversion of 4-hydroxy-tetrahydrodipicolinate (HTPA) to tetrahydrodipicolinate. The chain is 4-hydroxy-tetrahydrodipicolinate reductase from Nitrosospira multiformis (strain ATCC 25196 / NCIMB 11849 / C 71).